A 789-amino-acid polypeptide reads, in one-letter code: Glycerol-3-phosphate acyltransferase (789 aa).

Positions 275–280 match the HXXXXD motif motif; that stretch reads SHRSYI.

The protein belongs to the GPAT/DAPAT family.

Its subcellular location is the cell membrane. It catalyses the reaction sn-glycerol 3-phosphate + an acyl-CoA = a 1-acyl-sn-glycero-3-phosphate + CoA. It participates in phospholipid metabolism; CDP-diacylglycerol biosynthesis; CDP-diacylglycerol from sn-glycerol 3-phosphate: step 1/3. This is Glycerol-3-phosphate acyltransferase from Mycobacterium bovis (strain BCG / Pasteur 1173P2).